The sequence spans 299 residues: Pyridoxal kinase PdxY (299 aa).

S18 is a substrate binding site. Residues D120 and E157 each coordinate ATP. D235 contributes to the substrate binding site.

It belongs to the pyridoxine kinase family. PdxY subfamily. As to quaternary structure, homodimer. It depends on Mg(2+) as a cofactor.

The catalysed reaction is pyridoxal + ATP = pyridoxal 5'-phosphate + ADP + H(+). It participates in cofactor metabolism; pyridoxal 5'-phosphate salvage; pyridoxal 5'-phosphate from pyridoxal: step 1/1. Pyridoxal kinase involved in the salvage pathway of pyridoxal 5'-phosphate (PLP). Catalyzes the phosphorylation of pyridoxal to PLP. The sequence is that of Pyridoxal kinase PdxY from Deinococcus geothermalis (strain DSM 11300 / CIP 105573 / AG-3a).